The following is a 78-amino-acid chain: Large ribosomal subunit protein bL28 (78 aa).

It belongs to the bacterial ribosomal protein bL28 family.

The sequence is that of Large ribosomal subunit protein bL28 from Alcanivorax borkumensis (strain ATCC 700651 / DSM 11573 / NCIMB 13689 / SK2).